The primary structure comprises 377 residues: Protein-tyrosine sulfotransferase 2 (377 aa).

Residues 1 to 8 (MRLSMRRA) lie on the Cytoplasmic side of the membrane. Residues 9–25 (LLAAGLALALVLAVHLG) traverse the membrane as a helical; Signal-anchor for type II membrane protein segment. Residues 26-377 (QRVLECQAVL…NSTSSHLGSS (352 aa)) lie on the Lumenal side of the membrane. Residue 78–82 (RSGTT) coordinates 3'-phosphoadenylyl sulfate. An intrachain disulfide couples cysteine 96 to cysteine 156. Glutamate 99 acts as the Proton donor/acceptor in catalysis. Residues 101-105 (RIIPR) form an interaction with peptide substrate region. 3'-phosphoadenylyl sulfate-binding residues include arginine 183, serine 191, and arginine 195. Cysteines 225 and 233 form a disulfide. 3'-phosphoadenylyl sulfate is bound by residues tyrosine 238, 285–294 (STDQVIKPVN), and lysine 300. N-linked (GlcNAc...) asparagine glycans are attached at residues asparagine 343 and asparagine 368.

This sequence belongs to the protein sulfotransferase family. Homodimer. Can also form heterodimers with TPST1. In terms of processing, N-glycosylated.

It localises to the golgi apparatus membrane. It catalyses the reaction L-tyrosyl-[protein] + 3'-phosphoadenylyl sulfate = O-sulfo-L-tyrosine-[protein] + adenosine 3',5'-bisphosphate + H(+). Catalyzes the O-sulfation of tyrosine residues within acidic motifs of polypeptides, using 3'-phosphoadenylyl sulfate (PAPS) as cosubstrate. This Bos taurus (Bovine) protein is Protein-tyrosine sulfotransferase 2 (TPST2).